The chain runs to 162 residues: Phospholipase A and acyltransferase 3 (162 aa).

The Cytoplasmic segment spans residues 1-133 (MRAPIPEPKP…VARSDQVRDV (133 aa)). Residues 13 to 129 (LIEIFRPFYR…LRYGVARSDQ (117 aa)) enclose the LRAT domain. Active-site residues include His-23 and His-35. Cys-113 serves as the catalytic Acyl-thioester intermediate. Residues 134 to 154 (IIAASVAGMGLAAMSLIGVMF) traverse the membrane as a helical segment. Topologically, residues 155–162 (SRNKRQKQ) are lumenal.

The protein belongs to the H-rev107 family. Interacts with PPP2R1A; this interaction might decrease PP2A activity. Widely expressed. Low expression, if any, in hematopoietic cells and thymus. In testis, confined to round spermatids. Expressed in normal ovarian epithelial cells. Down-regulated in some ovarian carcinomas and testicular germ cell tumors. Highly expressed in white adipose tissue.

It is found in the cell membrane. The protein localises to the cytoplasm. It localises to the cytosol. The protein resides in the perinuclear region. Its subcellular location is the peroxisome membrane. It is found in the mitochondrion membrane. The protein localises to the nucleus envelope. It localises to the lysosome membrane. The protein resides in the endoplasmic reticulum membrane. The enzyme catalyses a 1,2-diacyl-sn-glycero-3-phosphocholine + H2O = a 1-acyl-sn-glycero-3-phosphocholine + a fatty acid + H(+). The catalysed reaction is a 1,2-diacyl-sn-glycero-3-phosphocholine + H2O = a 2-acyl-sn-glycero-3-phosphocholine + a fatty acid + H(+). It carries out the reaction 1,2-dihexadecanoyl-sn-glycero-3-phosphocholine + H2O = 1-hexadecanoyl-sn-glycero-3-phosphocholine + hexadecanoate + H(+). It catalyses the reaction 1,2-dihexadecanoyl-sn-glycero-3-phosphocholine + H2O = 2-hexadecanoyl-sn-glycero-3-phosphocholine + hexadecanoate + H(+). The enzyme catalyses 1-hexadecanoyl-2-(9Z-octadecenoyl)-sn-glycero-3-phosphocholine + H2O = 2-(9Z-octadecenoyl)-sn-glycero-3-phosphocholine + hexadecanoate + H(+). The catalysed reaction is 1-hexadecanoyl-2-(9Z-octadecenoyl)-sn-glycero-3-phosphocholine + H2O = 1-hexadecanoyl-sn-glycero-3-phosphocholine + (9Z)-octadecenoate + H(+). It carries out the reaction 1-hexadecanoyl-2-(5Z,8Z,11Z,14Z-eicosatetraenoyl)-sn-glycero-3-phosphocholine + H2O = 1-hexadecanoyl-sn-glycero-3-phosphocholine + (5Z,8Z,11Z,14Z)-eicosatetraenoate + H(+). It catalyses the reaction 1-hexadecanoyl-2-(5Z,8Z,11Z,14Z-eicosatetraenoyl)-sn-glycero-3-phosphocholine + H2O = 2-(5Z,8Z,11Z,14Z)-eicosatetraenoyl-sn-glycero-3-phosphocholine + hexadecanoate + H(+). The enzyme catalyses 1-hexadecanoyl-2-(9Z,12Z-octadecadienoyl)-sn-glycero-3-phosphoethanolamine + H2O = 1-hexadecanoyl-sn-glycero-3-phosphoethanolamine + (9Z,12Z)-octadecadienoate + H(+). The catalysed reaction is 1-hexadecanoyl-2-(9Z,12Z-octadecadienoyl)-sn-glycero-3-phosphoethanolamine + H2O = 2-(9Z,12Z)-octadecadienoyl-sn-glycero-3-phosphoethanolamine + hexadecanoate + H(+). It carries out the reaction 1-hexadecanoyl-2-(5Z,8Z,11Z,14Z-eicosatetraenoyl)-sn-glycero-3-phosphoethanolamine + H2O = 1-hexadecanoyl-sn-glycero-3-phosphoethanolamine + (5Z,8Z,11Z,14Z)-eicosatetraenoate + H(+). It catalyses the reaction 1-hexadecanoyl-2-(5Z,8Z,11Z,14Z-eicosatetraenoyl)-sn-glycero-3-phosphoethanolamine + H2O = 2-(5Z,8Z,11Z,14Z)-eicosatetraenoyl-sn-glycero-3-phosphoethanolamine + hexadecanoate + H(+). The enzyme catalyses 1-hexanoyl-2-acyl-sn-glycero-3-phosphocholine + H2O = hexanoate + a 2-acyl-sn-glycero-3-phosphocholine + H(+). The catalysed reaction is 1-hexanoyl-2-acyl-sn-glycero-3-phosphocholine + H2O = 1-hexanoyl-sn-glycero-3-phosphocholine + a fatty acid + H(+). It carries out the reaction 1,2-diheptadecanoyl-sn-glycero-3-phosphoethanolamine + 1-(9Z-octadecenoyl)-2-hexadecanoyl-sn-glycero-3-phosphocholine = 1,2-diheptadecanoyl-sn-glycero-3-phospho-N-hexadecanoyl-ethanolamine + 1-(9Z-octadecenoyl)-sn-glycero-3-phosphocholine + H(+). It catalyses the reaction 1,2-diheptadecanoyl-sn-glycero-3-phosphoethanolamine + 1-(9Z-octadecenoyl)-2-hexadecanoyl-sn-glycero-3-phosphocholine = 1,2-diheptadecanoyl-sn-glycero-3-phospho-N-(9Z-octadecenoyl)-ethanolamine + 2-hexadecanoyl-sn-glycero-3-phosphocholine + H(+). The enzyme catalyses 1,2-dihexanoyl-sn-glycero-3-phosphoethanolamine + 2-heptanoyl-sn-glycero-3-phosphocholine = hexanoyl-sn-glycero-3-phosphoethanolamine + 1-hexanoyl-2-heptanoyl-sn-glycero-3-phosphocholine. The catalysed reaction is 1-hexadecanoyl-2-octadecanoyl-sn-glycero-3-phosphocholine + H2O = octadecanoate + 1-hexadecanoyl-sn-glycero-3-phosphocholine + H(+). It carries out the reaction 1-hexadecanoyl-2-octadecanoyl-sn-glycero-3-phosphocholine + H2O = 2-octadecanoyl-sn-glycero-3-phosphocholine + hexadecanoate + H(+). It catalyses the reaction 1-octadecanoyl-2-hexadecanoyl-sn-glycero-3-phosphocholine + H2O = 1-octadecanoyl-sn-glycero-3-phosphocholine + hexadecanoate + H(+). The enzyme catalyses 1-octadecanoyl-2-hexadecanoyl-sn-glycero-3-phosphocholine + H2O = 2-hexadecanoyl-sn-glycero-3-phosphocholine + octadecanoate + H(+). The catalysed reaction is 1-hexadecanoyl-2-(9Z,12Z-octadecadienoyl)-sn-glycero-3-phosphocholine + H2O = (9Z,12Z)-octadecadienoate + 1-hexadecanoyl-sn-glycero-3-phosphocholine + H(+). It carries out the reaction 1-hexadecanoyl-2-(9Z,12Z-octadecadienoyl)-sn-glycero-3-phosphocholine + H2O = 2-(9Z,12Z-octadecadienoyl)-sn-glycero-3-phosphocholine + hexadecanoate + H(+). It catalyses the reaction 1,2-di-(9Z-octadecenoyl)-sn-glycero-3-phosphocholine + H2O = 2-(9Z-octadecenoyl)-sn-glycero-3-phosphocholine + (9Z)-octadecenoate + H(+). The enzyme catalyses 1,2-dihexadecanoyl-sn-glycero-3-phosphocholine + H2O = hexadecanoyl-sn-glycero-3-phosphocholine + hexadecanoate + H(+). The catalysed reaction is 1,2-di-(9Z-octadecenoyl)-sn-glycero-3-phosphocholine + H2O = 1-(9Z-octadecenoyl)-sn-glycero-3-phosphocholine + (9Z)-octadecenoate + H(+). It carries out the reaction 1,2-di-(9Z-octadecenoyl)-sn-glycero-3-phosphoethanolamine + 1,2-dihexadecanoyl-sn-glycero-3-phosphocholine = hexadecanoyl-sn-glycero-3-phosphocholine + N-hexadecanoyl-1,2-di-(9Z-octadecenoyl)-sn-glycero-3-phosphoethanolamine + H(+). It catalyses the reaction 1,2-di-(9Z,12Z-octadecadienoyl)-sn-glycero-3-phosphocholine + H2O = 1-(9Z,12Z)-octadecadienoyl-sn-glycero-3-phosphocholine + (9Z,12Z)-octadecadienoate + H(+). Functionally, exhibits both phospholipase A1/2 and acyltransferase activities. Shows phospholipase A1 (PLA1) and A2 (PLA2) activity, catalyzing the calcium-independent release of fatty acids from the sn-1 or sn-2 position of glycerophospholipids. For most substrates, PLA1 activity is much higher than PLA2 activity. Shows O-acyltransferase activity,catalyzing the transfer of a fatty acyl group from glycerophospholipid to the hydroxyl group of lysophospholipid. Shows N-acyltransferase activity, catalyzing the calcium-independent transfer of a fatty acyl group at the sn-1 position of phosphatidylcholine (PC) and other glycerophospholipids to the primary amine of phosphatidylethanolamine (PE), forming N-acylphosphatidylethanolamine (NAPE), which serves as precursor for N-acylethanolamines (NAEs). Exhibits high N-acyltransferase activity and low phospholipase A1/2 activity. Required for complete organelle rupture and degradation that occur during eye lens terminal differentiation, when fiber cells that compose the lens degrade all membrane-bound organelles in order to provide lens with transparency to allow the passage of light. Organelle membrane degradation is probably catalyzed by the phospholipase activity. (Microbial infection) Acts as a host factor for picornaviruses: required during early infection to promote viral genome release into the cytoplasm. May act as a cellular sensor of membrane damage at sites of virus entry, which relocalizes to sites of membrane rupture upon virus unfection. Facilitates safe passage of the RNA away from LGALS8, enabling viral genome translation by host ribosome. May also be involved in initiating pore formation, increasing pore size or in maintaining pores for genome delivery. The lipid-modifying enzyme activity is required for this process. This Homo sapiens (Human) protein is Phospholipase A and acyltransferase 3.